The chain runs to 71 residues: Exodeoxyribonuclease 7 small subunit (71 aa).

Belongs to the XseB family. In terms of assembly, heterooligomer composed of large and small subunits.

The protein localises to the cytoplasm. It carries out the reaction Exonucleolytic cleavage in either 5'- to 3'- or 3'- to 5'-direction to yield nucleoside 5'-phosphates.. Functionally, bidirectionally degrades single-stranded DNA into large acid-insoluble oligonucleotides, which are then degraded further into small acid-soluble oligonucleotides. The protein is Exodeoxyribonuclease 7 small subunit of Clostridium botulinum (strain ATCC 19397 / Type A).